The primary structure comprises 267 residues: RWD domain-containing protein 3 (267 aa).

The RWD domain maps to 7-114 (QELSALAAIF…LWTQQNLRHI (108 aa)). 2 interaction with UBE2I/UBC9 regions span residues 13–15 (AAI) and 100–102 (VHE).

Interacts with UBE2I/UBC9, NFKBIA, HIF1A and NCOA2.

It is found in the nucleus. The protein localises to the cytoplasm. Enhancer of SUMO conjugation. Via its interaction with UBE2I/UBC9, increases SUMO conjugation to proteins by promoting the binding of E1 and E2 enzymes, thioester linkage between SUMO and UBE2I/UBC9 and transfer of SUMO to specific target proteins which include HIF1A, PIAS, NFKBIA, NR3C1 and TOP1. Positively regulates the NF-kappa-B signaling pathway by enhancing the sumoylation of NF-kappa-B inhibitor alpha (NFKBIA), promoting its stabilization which consequently leads to an increased inhibition of NF-kappa-B transcriptional activity. Negatively regulates the hypoxia-inducible factor-1 alpha (HIF1A) signaling pathway by increasing the sumoylation of HIF1A, promoting its stabilization, transcriptional activity and the expression of its target gene VEGFA during hypoxia. Has no effect on ubiquitination. This Rattus norvegicus (Rat) protein is RWD domain-containing protein 3 (Rwdd3).